The primary structure comprises 345 residues: Tubulin-specific chaperone C (345 aa).

M1 is modified (N-acetylmethionine). The interval 1–56 (METGGLSAAALANGDLGSQRERTLVPERLQKREHERQLEVERRKQKRQDQEVEEEK) is disordered. Residues 18-50 (SQRERTLVPERLQKREHERQLEVERRKQKRQDQ) show a composition bias toward basic and acidic residues. 2 positions are modified to phosphoserine: S80 and S167. The segment at 139–170 (FKTRKKDAASATQVASAPDAPAAEGSLTSPPP) is disordered. Residues 170–322 (PLKEEGDFDS…NWNDVDDFNW (153 aa)) form the C-CAP/cofactor C-like domain.

The protein belongs to the TBCC family. In terms of assembly, supercomplex made of cofactors A to E. Cofactors A and D function by capturing and stabilizing tubulin in a quasi-native conformation. Cofactor E binds to the cofactor D-tubulin complex; interaction with cofactor C then causes the release of tubulin polypeptides that are committed to the native state.

Its subcellular location is the cytoplasm. Its function is as follows. Tubulin-folding protein; involved in the final step of the tubulin folding pathway. The sequence is that of Tubulin-specific chaperone C (TBCC) from Bos taurus (Bovine).